Consider the following 477-residue polypeptide: RTX-III toxin determinant D (477 aa).

Residues 1 to 59 are Cytoplasmic-facing; that stretch reads MKLWILGLGEFFQRYRNIWREIWKIRKQLDTPARQKDENEFLPRHLELIETPISKKPRL. Residues 60–77 traverse the membrane as a helical segment; sequence IAYLIMLFLFLAIVISII. Topologically, residues 78–477 are periplasmic; it reads SKVEIVASAT…ESITESLRER (400 aa).

This sequence belongs to the membrane fusion protein (MFP) (TC 8.A.1) family.

It is found in the cell inner membrane. In terms of biological role, involved in the transport of the toxin RTX-III. The sequence is that of RTX-III toxin determinant D (apxIIID) from Actinobacillus pleuropneumoniae (Haemophilus pleuropneumoniae).